The primary structure comprises 128 residues: MSFTTIFYIGFGGALGAILRSFTNGFVSKIFPNLSFPLGTLSVNIIGGFFIGFLMSLASNINIDINLKSFLVTGFLGGLTTFSTFSYENMLLLQSGNYTNAFLNIASNLLLSLLFCYFGFWIVKVMYA.

Helical transmembrane passes span 3 to 23 (FTTI…RSFT), 34 to 54 (LSFP…IGFL), 65 to 85 (INLK…FSTF), and 102 to 122 (FLNI…GFWI). 2 residues coordinate Na(+): Gly-77 and Thr-80.

Belongs to the fluoride channel Fluc/FEX (TC 1.A.43) family.

It localises to the cell inner membrane. The enzyme catalyses fluoride(in) = fluoride(out). Na(+) is not transported, but it plays an essential structural role and its presence is essential for fluoride channel function. Fluoride-specific ion channel. Important for reducing fluoride concentration in the cell, thus reducing its toxicity. The protein is Fluoride-specific ion channel FluC of Campylobacter fetus subsp. fetus (strain 82-40).